Consider the following 206-residue polypeptide: Large ribosomal subunit protein bL25 (206 aa).

The interval 1-91 is bL25 domain; sequence MEYRLKAYYR…RPEHVDFFVL (91 aa). The tract at residues 92 to 206 is CTC domain; that stretch reads SDEPVEMYVP…IKKGKEEEEE (115 aa). The tract at residues 184 to 206 is disordered; that stretch reads AEEAAAEVAEPEVIKKGKEEEEE. A compositionally biased stretch (basic and acidic residues) spans 195 to 206; it reads EVIKKGKEEEEE.

This sequence belongs to the bacterial ribosomal protein bL25 family. CTC subfamily. Part of the 50S ribosomal subunit. Contacts the 5S rRNA.

In terms of biological role, this is one of 3 proteins that mediate the attachment of the 5S rRNA onto the large ribosomal subunit. The polypeptide is Large ribosomal subunit protein bL25 (rplY) (Thermus thermophilus).